Here is a 341-residue protein sequence, read N- to C-terminus: tRNA N6-adenosine threonylcarbamoyltransferase (341 aa).

Residues histidine 111 and histidine 115 each contribute to the Fe cation site. Substrate is bound by residues 133–137, aspartate 166, glycine 179, aspartate 183, and asparagine 273; that span reads AVSGG. Aspartate 301 contacts Fe cation.

This sequence belongs to the KAE1 / TsaD family. Fe(2+) is required as a cofactor.

The protein localises to the cytoplasm. The enzyme catalyses L-threonylcarbamoyladenylate + adenosine(37) in tRNA = N(6)-L-threonylcarbamoyladenosine(37) in tRNA + AMP + H(+). Required for the formation of a threonylcarbamoyl group on adenosine at position 37 (t(6)A37) in tRNAs that read codons beginning with adenine. Is involved in the transfer of the threonylcarbamoyl moiety of threonylcarbamoyl-AMP (TC-AMP) to the N6 group of A37, together with TsaE and TsaB. TsaD likely plays a direct catalytic role in this reaction. The chain is tRNA N6-adenosine threonylcarbamoyltransferase from Geotalea daltonii (strain DSM 22248 / JCM 15807 / FRC-32) (Geobacter daltonii).